A 422-amino-acid chain; its full sequence is MSSSPSPRFVSRLTRNTLVLILAGGRGSRLMDLTTWRAKPAVPFGGKFRIIDFTLSNCINSGIRRIGVLTQYKAHSLIRHLRLGWGSLRGDFGEFVEILPAQQRTEGSWYRGTADAVYQSLDIVRMHDPDYVLILAGDHVYKMDYGPMLARHVETGADVTVGCLEVPVEEASAFGVMAVDGDNRVVRFQEKPADPPSIPGQSDRALASMGIYIFNRAFLFNQLIADARKESDHDFGKDIIPSLIDQARVIAFPFRDAATGGQAYWRDVGTIDAFWRTNLELVGVNPQLNLYDKEWPIWTHQEQLPPAKFVFDDDDRRGMAVDSMVSGGCIISGAYLRRSLLFSSVVVEDGSRVEDAVILPEAHIEPGCRIRKAVIDKHCRLAAGTVIGEDPEEDARRFHLSPGGVVLVTPDMLGQEIHNVYT.

Residues Tyr-110, Gly-175, 190–191, and Ser-208 contribute to the alpha-D-glucose 1-phosphate site; that span reads EK.

It belongs to the bacterial/plant glucose-1-phosphate adenylyltransferase family. As to quaternary structure, homotetramer.

It catalyses the reaction alpha-D-glucose 1-phosphate + ATP + H(+) = ADP-alpha-D-glucose + diphosphate. It functions in the pathway glycan biosynthesis; glycogen biosynthesis. Functionally, involved in the biosynthesis of ADP-glucose, a building block required for the elongation reactions to produce glycogen. Catalyzes the reaction between ATP and alpha-D-glucose 1-phosphate (G1P) to produce pyrophosphate and ADP-Glc. The chain is Glucose-1-phosphate adenylyltransferase 2 from Alkalilimnicola ehrlichii (strain ATCC BAA-1101 / DSM 17681 / MLHE-1).